The primary structure comprises 557 residues: Formate--tetrahydrofolate ligase (557 aa).

Residue 65–72 (TPAGEGKT) coordinates ATP.

The protein belongs to the formate--tetrahydrofolate ligase family.

The enzyme catalyses (6S)-5,6,7,8-tetrahydrofolate + formate + ATP = (6R)-10-formyltetrahydrofolate + ADP + phosphate. It participates in one-carbon metabolism; tetrahydrofolate interconversion. This Methylobacterium radiotolerans (strain ATCC 27329 / DSM 1819 / JCM 2831 / NBRC 15690 / NCIMB 10815 / 0-1) protein is Formate--tetrahydrofolate ligase.